Consider the following 346-residue polypeptide: N-acetyl-gamma-glutamyl-phosphate reductase (346 aa).

The active site involves cysteine 150.

Belongs to the NAGSA dehydrogenase family. Type 1 subfamily.

It localises to the cytoplasm. It carries out the reaction N-acetyl-L-glutamate 5-semialdehyde + phosphate + NADP(+) = N-acetyl-L-glutamyl 5-phosphate + NADPH + H(+). The protein operates within amino-acid biosynthesis; L-arginine biosynthesis; N(2)-acetyl-L-ornithine from L-glutamate: step 3/4. In terms of biological role, catalyzes the NADPH-dependent reduction of N-acetyl-5-glutamyl phosphate to yield N-acetyl-L-glutamate 5-semialdehyde. This Brevibacillus brevis (strain 47 / JCM 6285 / NBRC 100599) protein is N-acetyl-gamma-glutamyl-phosphate reductase.